A 208-amino-acid chain; its full sequence is Small ribosomal subunit protein uS4 (208 aa).

Residues 98–164 (SRLDNVVYRM…DRIKFALELA (67 aa)) form the S4 RNA-binding domain.

The protein belongs to the universal ribosomal protein uS4 family. In terms of assembly, part of the 30S ribosomal subunit. Contacts protein S5. The interaction surface between S4 and S5 is involved in control of translational fidelity.

One of the primary rRNA binding proteins, it binds directly to 16S rRNA where it nucleates assembly of the body of the 30S subunit. Functionally, with S5 and S12 plays an important role in translational accuracy. This chain is Small ribosomal subunit protein uS4, found in Nitrosococcus oceani (strain ATCC 19707 / BCRC 17464 / JCM 30415 / NCIMB 11848 / C-107).